We begin with the raw amino-acid sequence, 173 residues long: Alpha-crystallin A chain (173 aa).

An N-acetylmethionine modification is found at Met-1. A required for complex formation with BFSP1 and BFSP2 region spans residues 1–63 (MDIAIQHPWF…RTVLDSGISE (63 aa)). A Deamidated glutamine; partial modification is found at Gln-6. Ser-45 carries the post-translational modification Phosphoserine. Deamidated glutamine; partial is present on Gln-50. A sHSP domain is found at 52–162 (LFRTVLDSGI…GHSERAIPVS (111 aa)). Position 70 is an N6-acetyllysine (Lys-70). At Gln-90 the chain carries Deamidated glutamine; partial. Lys-99 bears the N6-acetyllysine mark. His-100 serves as a coordination point for Zn(2+). Asn-101 carries the deamidated asparagine; partial modification. Zn(2+) is bound by residues Glu-102 and His-107. Position 122 is a phosphoserine (Ser-122). The residue at position 123 (Asn-123) is a Deamidated asparagine; partial. Residues 144 to 173 (PKVPSGVDAGHSERAIPVSREEKPSSAPSS) are disordered. A compositionally biased stretch (basic and acidic residues) spans 153–167 (GHSERAIPVSREEKP). A Zn(2+)-binding site is contributed by His-154. O-linked (GlcNAc) serine glycosylation occurs at Ser-162.

The protein belongs to the small heat shock protein (HSP20) family. Heteromer composed of three CRYAA and one CRYAB subunits. Inter-subunit bridging via zinc ions enhances stability, which is crucial as there is no protein turn over in the lens. Can also form homodimers and homotetramers (dimers of dimers) which serve as the building blocks of homooligomers. Within homooligomers, the zinc-binding motif is created from residues of 3 different molecules. His-100 and Glu-102 from one molecule are ligands of the zinc ion, and His-107 and His-154 residues from additional molecules complete the site with tetrahedral coordination geometry. Part of a complex required for lens intermediate filament formation composed of BFSP1, BFSP2 and CRYAA. In terms of processing, acetylation at Lys-70 may increase chaperone activity. Undergoes age-dependent proteolytical cleavage at the C-terminus.

The protein localises to the cytoplasm. The protein resides in the nucleus. In terms of biological role, contributes to the transparency and refractive index of the lens. Acts as a chaperone, preventing aggregation of various proteins under a wide range of stress conditions. Required for the correct formation of lens intermediate filaments as part of a complex composed of BFSP1, BFSP2 and CRYAA. The protein is Alpha-crystallin A chain (CRYAA) of Pteropus poliocephalus (Grey-headed flying fox).